The chain runs to 104 residues: Large ribosomal subunit protein uL24 (104 aa).

This sequence belongs to the universal ribosomal protein uL24 family. Part of the 50S ribosomal subunit.

In terms of biological role, one of two assembly initiator proteins, it binds directly to the 5'-end of the 23S rRNA, where it nucleates assembly of the 50S subunit. One of the proteins that surrounds the polypeptide exit tunnel on the outside of the subunit. The protein is Large ribosomal subunit protein uL24 of Pseudoalteromonas translucida (strain TAC 125).